The following is a 223-amino-acid chain: uncharacterized protein (223 aa).

The tract at residues 40-70 (GSKRLKPAKFGTEGKERVEQRTERQRTGSSK) is disordered. A compositionally biased stretch (basic and acidic residues) spans 51-70 (TEGKERVEQRTERQRTGSSK).

This is an uncharacterized protein from Homo sapiens (Human).